The primary structure comprises 940 residues: Isoleucine--tRNA ligase (940 aa).

A 'HIGH' region motif is present at residues 58–68 (PYANGSIHIGH). E564 contacts L-isoleucyl-5'-AMP. A 'KMSKS' region motif is present at residues 605–609 (KMSKS). K608 serves as a coordination point for ATP. Residues C903, C906, C923, and C926 each contribute to the Zn(2+) site.

Belongs to the class-I aminoacyl-tRNA synthetase family. IleS type 1 subfamily. Monomer. Requires Zn(2+) as cofactor.

It is found in the cytoplasm. It catalyses the reaction tRNA(Ile) + L-isoleucine + ATP = L-isoleucyl-tRNA(Ile) + AMP + diphosphate. Catalyzes the attachment of isoleucine to tRNA(Ile). As IleRS can inadvertently accommodate and process structurally similar amino acids such as valine, to avoid such errors it has two additional distinct tRNA(Ile)-dependent editing activities. One activity is designated as 'pretransfer' editing and involves the hydrolysis of activated Val-AMP. The other activity is designated 'posttransfer' editing and involves deacylation of mischarged Val-tRNA(Ile). The polypeptide is Isoleucine--tRNA ligase (Shewanella sp. (strain MR-4)).